We begin with the raw amino-acid sequence, 470 residues long: FRIGIDA-like protein 1 (470 aa).

Positions 336 to 369 (KDQNLESEFTQEKVEERVEELEKNKALRKRNTTN) form a coiled coil. The segment at 355–400 (ELEKNKALRKRNTTNPPKQEPQQKGKKRTRDCKNGSQVPVPSQQLL) is disordered. Residues 388–400 (NGSQVPVPSQQLL) are compositionally biased toward polar residues.

The protein belongs to the Frigida family. As to quaternary structure, component of the transcription activator complex FRI-C composed of FRI, FRL1, SUF4, FLX and FES1. Interacts with FRI and SUF4. Expressed during seed development and in dry seed. Preferentially expressed in the chalazal endosperm during early stages of seed development.

Its function is as follows. Required for FRI-mediated up-regulation of FLC transcripts, but not redundant with FRI and only partially redundant with FRL2. Required for the stabilization of the FRI-C complex. The sequence is that of FRIGIDA-like protein 1 (FRL1) from Arabidopsis thaliana (Mouse-ear cress).